A 471-amino-acid polypeptide reads, in one-letter code: Major facilitator-type transporter psiT1 (471 aa).

A disordered region spans residues 1-36 (MNPTTATDAHERTSLLSGRPQSAANSTAPYERQVQP). Over residues 14–36 (SLLSGRPQSAANSTAPYERQVQP) the composition is skewed to polar residues. N-linked (GlcNAc...) asparagine glycosylation is present at asparagine 25. 8 consecutive transmembrane segments (helical) span residues 44–64 (TPVTVITIITLIYRLATTMVI), 108–128 (AIMVSMTTVIDGLGGILGTGI), 140–160 (PVLMFLLSCTMIDHLAILTVQ), 168–188 (LVTFGLIMIVETIGNENTTVF), 212–232 (GWLVLGGALAYSIGGSITTFL), 237–257 (AVYIVSFSVTGIVLTFTAFVL), 322–342 (LHSFIVTLADAYALPAMLIFF), and 356–376 (VMTTYSVSSVFVLAIALPLFI). Asparagine 384 is a glycosylation site (N-linked (GlcNAc...) asparagine). Residues 424 to 444 (VHITVISWTIESLAYIVLGTV) form a helical membrane-spanning segment.

It belongs to the major facilitator superfamily. TCR/Tet family.

The protein localises to the membrane. Major facilitator-type transporter; part of the gene cluster that mediates the biosynthesis of psilocybin, a psychotropic tryptamine-derived natural product. In Psilocybe cyanescens, this protein is Major facilitator-type transporter psiT1.